The sequence spans 57 residues: Large ribosomal subunit protein bL32 (57 aa).

Residues 1–23 (MAVPKKRTSKTRTNRRRAQKKAR) form a disordered region.

This sequence belongs to the bacterial ribosomal protein bL32 family.

The polypeptide is Large ribosomal subunit protein bL32 (Natranaerobius thermophilus (strain ATCC BAA-1301 / DSM 18059 / JW/NM-WN-LF)).